A 485-amino-acid chain; its full sequence is Rhamnulokinase (485 aa).

10–14 (ASSGR) is a binding site for ATP. Substrate is bound by residues Ala-78 and 233–235 (HDT). Asp-234 functions as the Proton acceptor in the catalytic mechanism. Thr-256 is a binding site for ATP. Residue Asn-293 coordinates substrate. ATP is bound at residue Gln-301. Cys-351 and Cys-368 form a disulfide bridge. Gly-400 provides a ligand contact to ATP.

It belongs to the rhamnulokinase family. Mg(2+) serves as cofactor.

The enzyme catalyses L-rhamnulose + ATP = L-rhamnulose 1-phosphate + ADP + H(+). Its pathway is carbohydrate degradation; L-rhamnose degradation; glycerone phosphate from L-rhamnose: step 2/3. Involved in the catabolism of L-rhamnose (6-deoxy-L-mannose). Catalyzes the transfer of the gamma-phosphate group from ATP to the 1-hydroxyl group of L-rhamnulose to yield L-rhamnulose 1-phosphate. This Bacillus subtilis (strain 168) protein is Rhamnulokinase.